The sequence spans 267 residues: Probable ribose-5-phosphate isomerase 1 (267 aa).

Gly2 is modified (N-acetylglycine). Ser92 is modified (phosphoserine).

Belongs to the ribose 5-phosphate isomerase family. Expressed in roots, cotyledons, leaves and flowers.

The protein resides in the cytoplasm. It catalyses the reaction aldehydo-D-ribose 5-phosphate = D-ribulose 5-phosphate. Its pathway is carbohydrate degradation; pentose phosphate pathway; D-ribose 5-phosphate from D-ribulose 5-phosphate (non-oxidative stage): step 1/1. Functionally, catalyzes the reversible conversion of ribose-5-phosphate to ribulose 5-phosphate. This chain is Probable ribose-5-phosphate isomerase 1 (RPI1), found in Arabidopsis thaliana (Mouse-ear cress).